The sequence spans 190 residues: MAGLLTLLGPAGRVSTRLRPLAPWLLGTATSCAPPLWALALSHPVPDARLLRTARGDCLSRQEPNRTPEPGGSVTGTEKKLSRTQQLKKVFQEYGAVGVSMHIGISLVSLGIFYTVVSSGIDMSAILLKLGFKESLVQSKMAAGTSTFVVAYAIHKLFAPVRISITLVSVPFVVRYFRSVGLFKPPATKP.

Residues 1 to 58 constitute a mitochondrion transit peptide; the sequence is MAGLLTLLGPAGRVSTRLRPLAPWLLGTATSCAPPLWALALSHPVPDARLLRTARGDC. A compositionally biased stretch (basic and acidic residues) spans 56 to 66; that stretch reads GDCLSRQEPNR. The disordered stretch occupies residues 56–81; sequence GDCLSRQEPNRTPEPGGSVTGTEKKL. Positions 78–189 constitute a DUF1279 domain; sequence EKKLSRTQQL…VGLFKPPATK (112 aa). 2 consecutive transmembrane segments (helical) span residues 97 to 117 and 148 to 168; these read VGVSMHIGISLVSLGIFYTVV and FVVAYAIHKLFAPVRISITLV.

Belongs to the FAM210 family. Expressed in late erythroblast differentiation stages.

The protein resides in the mitochondrion. It localises to the mitochondrion outer membrane. In terms of biological role, plays a role in erythroid differentiation. Involved in cell proliferation and tumor cell growth suppression. Involved in the metabolic reprogramming of cancer cells in a PDK4-dependent manner. In Mus musculus (Mouse), this protein is Protein FAM210B, mitochondrial.